Reading from the N-terminus, the 122-residue chain is Large ribosomal subunit protein uL14c (122 aa).

It belongs to the universal ribosomal protein uL14 family. As to quaternary structure, part of the 50S ribosomal subunit.

The protein resides in the plastid. Its subcellular location is the chloroplast. Its function is as follows. Binds to 23S rRNA. In Zygnema circumcarinatum (Green alga), this protein is Large ribosomal subunit protein uL14c.